The following is a 323-amino-acid chain: Cell division protein ZipA (323 aa).

Residues 1–4 lie on the Periplasmic side of the membrane; sequence MDLN. The chain crosses the membrane as a helical span at residues 5 to 25; it reads TILIILGIIALIILVVHGLWA. Residues 26-323 are Cytoplasmic-facing; it reads NRREKSQYFK…AEKAYLDKVR (298 aa). The disordered stretch occupies residues 44 to 73; that stretch reads SRLREPPAHIQSASEEKKDANTSTPTAEVS.

The protein belongs to the ZipA family. As to quaternary structure, interacts with FtsZ via their C-terminal domains.

It is found in the cell inner membrane. Essential cell division protein that stabilizes the FtsZ protofilaments by cross-linking them and that serves as a cytoplasmic membrane anchor for the Z ring. Also required for the recruitment to the septal ring of downstream cell division proteins. This is Cell division protein ZipA from Pasteurella multocida (strain Pm70).